The sequence spans 385 residues: DnaJ homolog subfamily C member 28 (385 aa).

A J domain is found at 48-132; that stretch reads EYYRLLNLDE…EGKFKYNTPQ (85 aa). Residues 261–318 are a coiled coil; it reads KEIKDTIEQLREALLMSRKKLGNPLSPTEQKQWAQVCEQFQEKIRKLNKRINDFNLIV.

Functionally, may have a role in protein folding or as a chaperone. This is DnaJ homolog subfamily C member 28 (Dnajc28) from Mus musculus (Mouse).